The following is a 282-amino-acid chain: 2-dehydro-3-deoxyphosphooctonate aldolase (282 aa).

This sequence belongs to the KdsA family.

Its subcellular location is the cytoplasm. The enzyme catalyses D-arabinose 5-phosphate + phosphoenolpyruvate + H2O = 3-deoxy-alpha-D-manno-2-octulosonate-8-phosphate + phosphate. The protein operates within carbohydrate biosynthesis; 3-deoxy-D-manno-octulosonate biosynthesis; 3-deoxy-D-manno-octulosonate from D-ribulose 5-phosphate: step 2/3. Its pathway is bacterial outer membrane biogenesis; lipopolysaccharide biosynthesis. The polypeptide is 2-dehydro-3-deoxyphosphooctonate aldolase (Granulibacter bethesdensis (strain ATCC BAA-1260 / CGDNIH1)).